Consider the following 585-residue polypeptide: Putative indole-3-acetic acid-amido synthetase GH3.9 (585 aa).

Belongs to the IAA-amido conjugating enzyme family.

Catalyzes the synthesis of indole-3-acetic acid (IAA)-amino acid conjugates, providing a mechanism for the plant to cope with the presence of excess auxin. The sequence is that of Putative indole-3-acetic acid-amido synthetase GH3.9 (GH3.9) from Arabidopsis thaliana (Mouse-ear cress).